The chain runs to 101 residues: Small ubiquitin-related modifier 1 (101 aa).

Residue serine 2 is modified to N-acetylserine. Serine 2 bears the Phosphoserine mark. A Glycyl lysine isopeptide (Lys-Gly) (interchain with G-Cter in SUMO1); alternate cross-link involves residue lysine 7. Lysine 7 participates in a covalent cross-link: Glycyl lysine isopeptide (Lys-Gly) (interchain with G-Cter in SUMO2); alternate. The residue at position 9 (serine 9) is a Phosphoserine. Residues lysine 16, lysine 17, and lysine 23 each participate in a glycyl lysine isopeptide (Lys-Gly) (interchain with G-Cter in SUMO2) cross-link. The Ubiquitin-like domain occupies 20–97; sequence EYIKLKVIGQ…IEVYHEQTGG (78 aa). Residue lysine 25 forms a Glycyl lysine isopeptide (Lys-Gly) (interchain with G-Cter in SUMO1) linkage. Phosphoserine is present on serine 32. Glycyl lysine isopeptide (Lys-Gly) (interchain with G-Cter in SUMO2) cross-links involve residues lysine 37, lysine 39, lysine 45, and lysine 46. Glycine 97 is covalently cross-linked (Glycyl lysine isopeptide (Gly-Lys) (interchain with K-? in acceptor proteins)). A propeptide spanning residues 98–101 is cleaved from the precursor; that stretch reads HSTV.

It belongs to the ubiquitin family. SUMO subfamily. In terms of assembly, covalently attached to KCNB1; UBE2I increases cross-linking with KCNB1 and PIAS1 decreases cross-links with KCNB1. Interacts with SAE2, RANBP2, PIAS1 and PIAS2. Interacts with PRKN. Covalently attached to a number of proteins such as IKFZ1, PML, RANGAP1, HIPK2, SP100, p53, p73-alpha, MDM2, JUN, DNMT3B and TDG. Also interacts with HIF1A, HIPK2, HIPK3, CHD3, EXOSC9, RAD51 and RAD52. Interacts with USP25 (via ts SIM domain); the interaction weakly sumoylates USP25. Interacts with SIMC1, CASP8AP2, RNF111 and SOBP (via SIM domains). Interacts with BHLHE40/DEC1. Interacts with RWDD3. Interacts with UBE2I/UBC9 and this interaction is enhanced in the presence of RWDD3. Interacts with MTA1. Interacts with SENP2. Interacts with HINT1. Post-translationally, cleavage of precursor form by SENP1, SENP2 is necessary for function. Polymeric SUMO1 chains undergo polyubiquitination by RNF4.

It localises to the nucleus membrane. The protein resides in the nucleus speckle. Its subcellular location is the cytoplasm. It is found in the nucleus. The protein localises to the PML body. It localises to the cell membrane. Functionally, ubiquitin-like protein that can be covalently attached to proteins as a monomer or a lysine-linked polymer. Covalent attachment via an isopeptide bond to its substrates requires prior activation by the E1 complex SAE1-SAE2 and linkage to the E2 enzyme UBE2I, and can be promoted by E3 ligases such as PIAS1-4, RANBP2 or CBX4. This post-translational modification on lysine residues of proteins plays a crucial role in a number of cellular processes such as nuclear transport, DNA replication and repair, mitosis and signal transduction. Involved for instance in targeting RANGAP1 to the nuclear pore complex protein RANBP2. Covalently attached to the voltage-gated potassium channel KCNB1; this modulates the gating characteristics of KCNB1. Polymeric SUMO1 chains are also susceptible to polyubiquitination which functions as a signal for proteasomal degradation of modified proteins. May also regulate a network of genes involved in palate development. Covalently attached to ZFHX3. This Cervus nippon (Sika deer) protein is Small ubiquitin-related modifier 1 (SUMO1).